A 292-amino-acid polypeptide reads, in one-letter code: 2-(5''-triphosphoribosyl)-3'-dephosphocoenzyme-A synthase (292 aa).

The protein belongs to the CitG/MdcB family.

The enzyme catalyses 3'-dephospho-CoA + ATP = 2'-(5''-triphospho-alpha-D-ribosyl)-3'-dephospho-CoA + adenine. Its function is as follows. Catalyzes the formation of 2-(5''-triphosphoribosyl)-3'-dephosphocoenzyme-A, the precursor of the prosthetic group of the holo-acyl carrier protein (gamma chain) of citrate lyase, from ATP and dephospho-CoA. This is 2-(5''-triphosphoribosyl)-3'-dephosphocoenzyme-A synthase from Escherichia coli O7:K1 (strain IAI39 / ExPEC).